We begin with the raw amino-acid sequence, 759 residues long: LON peptidase N-terminal domain and RING finger protein 3 (759 aa).

Residues 1-69 (MESVRIEQML…PGTSTPESKV (69 aa)) are disordered. A compositionally biased stretch (polar residues) spans 57 to 66 (EQSPGTSTPE). The TPR 1 repeat unit spans residues 67–100 (SKVLLTQADALASRGRIREALEVYRQLSERQQLV). The RING-type 1 zinc finger occupies 158 to 196 (CRKCHGFLSDPVSLSCGHTFCKLCLERGRAADRRCALCG). TPR repeat units follow at residues 243–276 (ASQLRHEGNRLYRERQVEAALLKYNEAVKLAPND), 278–310 (LLYSNRSQIYFTLESHENALHDAEIACKLRPMG), and 312–344 (KAHFRKAQALATLGKVEEALREFLYCVSLDGKN). The tract at residues 360 to 454 (HCSSQEEAAA…TDQGDKPALS (95 aa)) is disordered. A compositionally biased stretch (basic and acidic residues) spans 380–393 (AKVKGDGQQHHMKD). The RING-type 2 zinc-finger motif lies at 467–505 (CALCMRLFYEPVTTPCGHTFCLKCLERCLDHNAKCPLCK). In terms of domain architecture, Lon N-terminal spans 546-755 (MEELSNLNKN…GIRRVLAFIS (210 aa)).

The protein is LON peptidase N-terminal domain and RING finger protein 3 (LONRF3) of Homo sapiens (Human).